Consider the following 519-residue polypeptide: DDB1- and CUL4-associated factor 17 (519 aa).

2 helical membrane-spanning segments follow: residues 186-206 (VLLY…ILEI) and 222-242 (GILI…QAII).

Interacts with DDB1, CUL4A and CUL4B. As to expression, ubiquitously expressed in the embryo, with higher expression in brain, liver and skin tissues.

Its subcellular location is the membrane. It is found in the nucleus. It localises to the nucleolus. The protein operates within protein modification; protein ubiquitination. In terms of biological role, may function as a substrate receptor for CUL4-DDB1 E3 ubiquitin-protein ligase complex. The protein is DDB1- and CUL4-associated factor 17 (Dcaf17) of Mus musculus (Mouse).